Consider the following 1526-residue polypeptide: Ig-like and fibronectin type-III domain-containing protein 2 (1526 aa).

An N-terminal signal peptide occupies residues 1 to 19; that stretch reads MMRWRLAVLFLTLLASTTG. A disordered region spans residues 20 to 39; that stretch reads DDTTTKASVSTTTKKGTDGP. The Extracellular portion of the chain corresponds to 20 to 1415; sequence DDTTTKASVS…RRSASKGSSS (1396 aa). Positions 24-33 are enriched in low complexity; sequence TKASVSTTTK. The 132-residue stretch at 39–170 folds into the Ig-like C2-type 1 domain; sequence PHLTTDDEGF…ELLEFQVEVL (132 aa). An intrachain disulfide couples Cys61 to Cys154. Residues Asn87, Asn143, Asn158, Asn181, Asn414, Asn427, Asn475, Asn489, Asn533, Asn590, Asn617, and Asn662 are each glycosylated (N-linked (GlcNAc...) asparagine). Residues 379–470 enclose the Fibronectin type-III 1 domain; that stretch reads APRGKRDVDF…VRNIASTNVH (92 aa). Residues 587 to 678 form the Fibronectin type-III 2 domain; it reads APGNVTISEL…TAKLFSTLPT (92 aa). One can recognise a WR1 domain in the interval 682-724; sequence PLCTIGEPIYMNDGRVMICDAVNPCPNGFRCTGAGSDLSYCCP. N-linked (GlcNAc...) asparagine glycosylation is found at Asn754, Asn871, Asn906, Asn939, Asn979, Asn1004, and Asn1049. Fibronectin type-III domains lie at 827-914 and 924-1020; these read AVRN…TKPA and APEK…AQKD. The 92-residue stretch at 1116 to 1207 folds into the Ig-like C2-type 2 domain; that stretch reads ASVTMKKDKI…SRVEASSEVI (92 aa). Cys1137 and Cys1190 are oxidised to a cystine. Asn1250 carries an N-linked (GlcNAc...) asparagine glycan. The 93-residue stretch at 1314–1406 folds into the Fibronectin type-III 5 domain; sequence APSEVSNVRI…SAIPKDSEPR (93 aa). Residues 1416–1436 form a helical membrane-spanning segment; it reads AFWIVVILVVFGVLIAGLAVL. Over 1437 to 1526 the chain is Cytoplasmic; it reads SKRRELPYPI…NGMRYAKLET (90 aa). Residues 1485 to 1518 form a disordered region; that stretch reads SATTGTAAATQSEWQSANLEANSTTDNSHEYRNG. A compositionally biased stretch (polar residues) spans 1495–1510; that stretch reads QSEWQSANLEANSTTD.

The protein localises to the cell membrane. The chain is Ig-like and fibronectin type-III domain-containing protein 2 from Caenorhabditis elegans.